A 150-amino-acid polypeptide reads, in one-letter code: 3-hydroxyacyl-[acyl-carrier-protein] dehydratase FabZ (150 aa).

Residue H51 is part of the active site.

The protein belongs to the thioester dehydratase family. FabZ subfamily.

It is found in the cytoplasm. It carries out the reaction a (3R)-hydroxyacyl-[ACP] = a (2E)-enoyl-[ACP] + H2O. Functionally, involved in unsaturated fatty acids biosynthesis. Catalyzes the dehydration of short chain beta-hydroxyacyl-ACPs and long chain saturated and unsaturated beta-hydroxyacyl-ACPs. The sequence is that of 3-hydroxyacyl-[acyl-carrier-protein] dehydratase FabZ from Geobacter sulfurreducens (strain ATCC 51573 / DSM 12127 / PCA).